Reading from the N-terminus, the 198-residue chain is Potassium-transporting ATPase KdpC subunit (198 aa).

The chain crosses the membrane as a helical span at residues 8–28 (ILAVLVFTILCGIIYPVSTTV).

The protein belongs to the KdpC family. The system is composed of three essential subunits: KdpA, KdpB and KdpC.

The protein resides in the cell membrane. In terms of biological role, part of the high-affinity ATP-driven potassium transport (or Kdp) system, which catalyzes the hydrolysis of ATP coupled with the electrogenic transport of potassium into the cytoplasm. This subunit acts as a catalytic chaperone that increases the ATP-binding affinity of the ATP-hydrolyzing subunit KdpB by the formation of a transient KdpB/KdpC/ATP ternary complex. The chain is Potassium-transporting ATPase KdpC subunit from Clostridium perfringens (strain ATCC 13124 / DSM 756 / JCM 1290 / NCIMB 6125 / NCTC 8237 / Type A).